Consider the following 252-residue polypeptide: 2-succinyl-6-hydroxy-2,4-cyclohexadiene-1-carboxylate synthase (252 aa).

Belongs to the AB hydrolase superfamily. MenH family. In terms of assembly, monomer.

It catalyses the reaction 5-enolpyruvoyl-6-hydroxy-2-succinyl-cyclohex-3-ene-1-carboxylate = (1R,6R)-6-hydroxy-2-succinyl-cyclohexa-2,4-diene-1-carboxylate + pyruvate. The protein operates within quinol/quinone metabolism; 1,4-dihydroxy-2-naphthoate biosynthesis; 1,4-dihydroxy-2-naphthoate from chorismate: step 3/7. It functions in the pathway quinol/quinone metabolism; menaquinone biosynthesis. In terms of biological role, catalyzes a proton abstraction reaction that results in 2,5-elimination of pyruvate from 2-succinyl-5-enolpyruvyl-6-hydroxy-3-cyclohexene-1-carboxylate (SEPHCHC) and the formation of 2-succinyl-6-hydroxy-2,4-cyclohexadiene-1-carboxylate (SHCHC). The protein is 2-succinyl-6-hydroxy-2,4-cyclohexadiene-1-carboxylate synthase of Escherichia coli (strain UTI89 / UPEC).